The following is a 306-amino-acid chain: Pseudouridine-5'-phosphate glycosidase (306 aa).

Catalysis depends on glutamate 28, which acts as the Proton donor. Residues lysine 89 and valine 109 each coordinate substrate. Aspartate 139 contributes to the Mn(2+) binding site. 141-143 (SAD) is a substrate binding site. Lysine 160 acts as the Nucleophile in catalysis.

Belongs to the pseudouridine-5'-phosphate glycosidase family. In terms of assembly, homotrimer. It depends on Mn(2+) as a cofactor.

It catalyses the reaction D-ribose 5-phosphate + uracil = psi-UMP + H2O. Functionally, catalyzes the reversible cleavage of pseudouridine 5'-phosphate (PsiMP) to ribose 5-phosphate and uracil. Functions biologically in the cleavage direction, as part of a pseudouridine degradation pathway. The chain is Pseudouridine-5'-phosphate glycosidase from Gemmatimonas aurantiaca (strain DSM 14586 / JCM 11422 / NBRC 100505 / T-27).